The sequence spans 323 residues: Acetyl-coenzyme A carboxylase carboxyl transferase subunit alpha (323 aa).

A CoA carboxyltransferase C-terminal domain is found at 39-293 (RLSKKSQQLT…RRALGDSLRQ (255 aa)).

Belongs to the AccA family. Acetyl-CoA carboxylase is a heterohexamer composed of biotin carboxyl carrier protein (AccB), biotin carboxylase (AccC) and two subunits each of ACCase subunit alpha (AccA) and ACCase subunit beta (AccD).

Its subcellular location is the cytoplasm. It catalyses the reaction N(6)-carboxybiotinyl-L-lysyl-[protein] + acetyl-CoA = N(6)-biotinyl-L-lysyl-[protein] + malonyl-CoA. The protein operates within lipid metabolism; malonyl-CoA biosynthesis; malonyl-CoA from acetyl-CoA: step 1/1. Functionally, component of the acetyl coenzyme A carboxylase (ACC) complex. First, biotin carboxylase catalyzes the carboxylation of biotin on its carrier protein (BCCP) and then the CO(2) group is transferred by the carboxyltransferase to acetyl-CoA to form malonyl-CoA. This is Acetyl-coenzyme A carboxylase carboxyl transferase subunit alpha from Burkholderia pseudomallei (strain 1106a).